Consider the following 405-residue polypeptide: Neisseria adhesin A (405 aa).

The N-terminal stretch at 1–23 (MKHFPSKVLTTAILATFCSGALA) is a signal peptide. Residues 24–87 (ATNDDDVKKA…ADDFKGLGLK (64 aa)) form a head domain region. 2 coiled-coil regions span residues 87–170 (KKVV…KLEA) and 181–329 (AFND…LRKE). The interval 88-350 (KVVTNLTKTV…SGLFQPYNVG (263 aa)) is coiled stalk domain. An outer membrane translocation of the passenger domain region spans residues 312–350 (HDTRLNGLDKTVSDLRKETRQGLAEQAALSGLFQPYNVG). Beta stranded transmembrane passes span 350 to 360 (GRFNVTAAVGG), 364 to 375 (ESAVAIGTGFRF), 382 to 388 (KAGVAVG), and 394 to 405 (SAAYHVGVNYEW). The translocator domain stretch occupies residues 351-405 (RFNVTAAVGGYKSESAVAIGTGFRFTENFAAKAGVAVGTSSGSSAAYHVGVNYEW).

This sequence belongs to the autotransporter-2 (AT-2) (TC 1.B.40) family. In terms of assembly, the non-membrane anchored protein (residues 24-350) probably forms a homotrimer; it is assumed the mature protein forms trimers in situ. The mature protein without the membrane-targeting segment (residues 24-350) binds to human heat shock 90 beta protein (HSP90AB1) both in vitro and when incubated with human monocytes. A subsequent paper showed binding of the same fragment in epithelial cells to both HSP90AA1 and HSP90AB1; in vitro the interaction is stabilized by ADP and the Hsp90 inhibitor 17-AAG (17-N-allylamino-17-demethoxygeldanamycin), in vitro and in vivo both interactions are inhibited by ATP. Binds human oxidized low-density lipoprotein receptor 1 (LOX-1, OLR1) in protein microarrays, in solution and when LOX-1 is expressed on the cell surface. Binds via the head and the beginning of the coiled stalk (residues 24-170); binding can be abrogated by monoclonal antibodies against those specific regions of NadA. Other potential binding partners were identified but not characterized in the same study. Forms high molecular weight oligomers in whole cell extracts that are not disrupted by boiling in SDS buffer.

It localises to the cell outer membrane. It is found in the cell surface. Adheres to and induces bacterial uptake by human epithelial cells in a microfilament-dependent process. Binding is reduced by pronase treatment, suggesting there is a protein receptor on the human cells. Possible human protein receptors include integrin beta-1 (ITGB1) and oxidized low-density lipoprotein receptor 1 (OLR1). Binds to extracellular human Hsp90 (preferentially the beta isoform, HSP90AB1) on monocytes, binding stimulates monocytes in a TLR4-dependent fashion, polymixin B, which binds NadA, blocks the activation. Hsp90 is probably not the first receptor on human monocytes. Non-membrane anchored protein (residues 24-350) is internalized into human epithelial cells by hijacking the endosome recycling pathway and may be recycled back to the cell surface, which might aid transcellular trafficking of the bacteria. A bacterial cell surface protein; antisera against this protein induce complement-mediated killing of this and other strains. In Neisseria meningitidis serogroup B, this protein is Neisseria adhesin A.